Here is a 344-residue protein sequence, read N- to C-terminus: UDP-glycosyltransferase 73C4 (344 aa).

Residues serine 145, 202–203 (WA), 220–228 (HCGWNSSLE), and 242–245 (FAEQ) each bind UDP-alpha-D-glucose.

Belongs to the UDP-glycosyltransferase family. As to expression, expressed in flowers and fruits.

Its subcellular location is the cytoplasm. The protein localises to the nucleus. Probable glucosyltransferase that cannot glycosylate abscisic acid (ABA) and auxin (IAA). The protein is UDP-glycosyltransferase 73C4 of Solanum lycopersicum (Tomato).